The chain runs to 481 residues: Glutamate mutase epsilon subunit (481 aa).

An L-glutamate-binding site is contributed by R67. Residue G69 participates in adenosylcob(III)alamin binding. Residue R99 participates in L-glutamate binding. An adenosylcob(III)alamin-binding site is contributed by N122. Residues 148–149 (RH), E170, and Y176 each bind L-glutamate. P179 is an adenosylcob(III)alamin binding site. Residue Y180 participates in L-glutamate binding. Adenosylcob(III)alamin contacts are provided by F296, K325, E329, and I333.

It belongs to the methylaspartate mutase GlmE subunit family. In terms of assembly, heterotetramer composed of 2 epsilon subunits (GlmE) and 2 sigma subunits (GlmS). GlmE exists as a homodimer and GlmS as a monomer. Requires adenosylcob(III)alamin as cofactor.

It catalyses the reaction (2S,3S)-3-methyl-L-aspartate = L-glutamate. It functions in the pathway amino-acid degradation; L-glutamate degradation via mesaconate pathway; acetate and pyruvate from L-glutamate: step 1/4. In terms of biological role, catalyzes the carbon skeleton rearrangement of L-glutamate to L-threo-3-methylaspartate ((2S,3S)-3-methylaspartate). The protein is Glutamate mutase epsilon subunit of Yersinia enterocolitica serotype O:8 / biotype 1B (strain NCTC 13174 / 8081).